Consider the following 352-residue polypeptide: Farnesyl pyrophosphate synthase (352 aa).

Isopentenyl diphosphate contacts are provided by lysine 52, arginine 55, and glutamine 93. Mg(2+) contacts are provided by aspartate 100 and aspartate 104. Arginine 109 provides a ligand contact to dimethylallyl diphosphate. Arginine 110 is an isopentenyl diphosphate binding site. Dimethylallyl diphosphate is bound by residues lysine 197, threonine 198, glutamine 237, lysine 254, and lysine 263.

Belongs to the FPP/GGPP synthase family. Requires Mg(2+) as cofactor.

The enzyme catalyses isopentenyl diphosphate + dimethylallyl diphosphate = (2E)-geranyl diphosphate + diphosphate. It catalyses the reaction isopentenyl diphosphate + (2E)-geranyl diphosphate = (2E,6E)-farnesyl diphosphate + diphosphate. The protein operates within isoprenoid biosynthesis; farnesyl diphosphate biosynthesis; farnesyl diphosphate from geranyl diphosphate and isopentenyl diphosphate: step 1/1. Its pathway is isoprenoid biosynthesis; geranyl diphosphate biosynthesis; geranyl diphosphate from dimethylallyl diphosphate and isopentenyl diphosphate: step 1/1. Farnesyl pyrophosphate synthase; part of the second module of ergosterol biosynthesis pathway that includes the middle steps of the pathway. ERG20 catalyzes the sequential condensation of isopentenyl pyrophosphate with dimethylallyl pyrophosphate, and then with the resultant geranylpyrophosphate to the ultimate product farnesyl pyrophosphate. The second module is carried out in the vacuole and involves the formation of farnesyl diphosphate, which is also an important intermediate in the biosynthesis of ubiquinone, dolichol, heme and prenylated proteins. Activity by the mevalonate kinase ERG12 first converts mevalonate into 5-phosphomevalonate. 5-phosphomevalonate is then further converted to 5-diphosphomevalonate by the phosphomevalonate kinase ERG8. The diphosphomevalonate decarboxylase MVD1/ERG19 then produces isopentenyl diphosphate. The isopentenyl-diphosphate delta-isomerase IDI1 then catalyzes the 1,3-allylic rearrangement of the homoallylic substrate isopentenyl (IPP) to its highly electrophilic allylic isomer, dimethylallyl diphosphate (DMAPP). Finally the farnesyl diphosphate synthase ERG20 catalyzes the sequential condensation of isopentenyl pyrophosphate with dimethylallyl pyrophosphate, and then with the resultant geranylpyrophosphate to the ultimate product farnesyl pyrophosphate. The protein is Farnesyl pyrophosphate synthase (ERG20) of Saccharomyces cerevisiae (strain ATCC 204508 / S288c) (Baker's yeast).